The primary structure comprises 355 residues: UPF0421 protein BALH_2468 (355 aa).

4 helical membrane-spanning segments follow: residues 19 to 39 (IAVF…IFAV), 74 to 94 (FTFF…FTIV), 109 to 129 (TLTA…AFLI), and 131 to 151 (LATT…ILPP).

The protein belongs to the UPF0421 family.

It is found in the cell membrane. This Bacillus thuringiensis (strain Al Hakam) protein is UPF0421 protein BALH_2468.